The chain runs to 408 residues: LysM domain-containing protein ARB_01488 (408 aa).

The signal sequence occupies residues 1-17 (MVKYALLPLVAVSLVQA). Residues 42-91 (SWINVVDASGKLTCDAFLDTINVAKRQFIFWNPQLNSDCSNIQSKASYCA) enclose the LysM 1 domain. A disordered region spans residues 98 to 178 (SKQTRGQMDP…HGPKEAPPPD (81 aa)). Over residues 106–116 (DPPPKTKPLPP) the composition is skewed to pro residues. LysM domains lie at 270-320 (QYHT…RVCV) and 360-406 (SFEL…YACV).

The protein resides in the secreted. Might have a role in sequestration of chitin oligosaccharides (breakdown products of fungal cell walls that are released during invasion and act as triggers of host immunity) to dampen host defense. The protein is LysM domain-containing protein ARB_01488 of Arthroderma benhamiae (strain ATCC MYA-4681 / CBS 112371) (Trichophyton mentagrophytes).